A 151-amino-acid polypeptide reads, in one-letter code: Cytochrome c-type biogenesis protein CcmE 1 (151 aa).

Residues 1-8 lie on the Cytoplasmic side of the membrane; it reads MNPLRKKR. Residues 9-29 form a helical; Signal-anchor for type II membrane protein membrane-spanning segment; that stretch reads LIIILAILVGVGAAVGLALSA. Topologically, residues 30-151 are periplasmic; sequence LQQNINLFYT…QSAPTPAKEG (122 aa). Heme-binding residues include histidine 124 and tyrosine 128. The segment at 131-151 is disordered; that stretch reads PEVTKALKDSGQSAPTPAKEG.

The protein belongs to the CcmE/CycJ family.

The protein resides in the cell inner membrane. Heme chaperone required for the biogenesis of c-type cytochromes. Transiently binds heme delivered by CcmC and transfers the heme to apo-cytochromes in a process facilitated by CcmF and CcmH. The protein is Cytochrome c-type biogenesis protein CcmE 1 of Pseudomonas fluorescens (strain Pf0-1).